The primary structure comprises 769 residues: Trehalose 6-phosphate phosphorylase (769 aa).

A substrate-binding site is contributed by Trp-342–Asp-343. Residue Glu-480 is the Proton donor of the active site. A substrate-binding site is contributed by Lys-589–Gln-590.

Belongs to the glycosyl hydrolase 65 family. Monomer.

The catalysed reaction is alpha,alpha-trehalose 6-phosphate + phosphate = beta-D-glucose 1-phosphate + D-glucose 6-phosphate. In terms of biological role, catalyzes the conversion of trehalose 6-phosphate into glucose 1-phosphate and glucose 6-phosphate. The polypeptide is Trehalose 6-phosphate phosphorylase (trePP) (Lactococcus lactis subsp. lactis (strain IL1403) (Streptococcus lactis)).